Here is a 1015-residue protein sequence, read N- to C-terminus: MLKKPSGREADMPVDFLTTEQVESYGRFTGEPDELQLARYFHLDEADKEFIGKSRGDHNRLGIALQIGCVRFLGTFLTDMNHIPSGVRHFTARQLGIRDITVLAEYGQRENTRREHAALIRQHYQYREFAWPWTFRLTRLLYTRSWISNERPGLLFDLATGWLMQHRIILPGATTLTRLISEVREKATLRLWNKLALIPSAEQRSQLEMLLGPTDCSRLSLLESLKKGPVTISGPAFNEAIERWKTLNDFGLHAENLSTLPAVRLKNLARYAGMTSVFNIARMSPQKRMAVLVAFVLAWETLALDDALEVLDAMLAVIIRDARKIGQKKRLRSLKDLDKSALALASACSYLLKEETPDESIRAEVFSYIPRQKLAEIITLVREIARPSDDNFHDEMVEQYGRVRRFLPHLLNTVKFSSAPAGVTTLNACDYLSREFSSRRQFFDDAPTEIISQSWKRLVINKEKHITRRGYTLCFLSKLQDSLRRRDVYVTGSNRWGDPRARLLQGADWQANRIKVYRSLGHPTDPQEAIKSLGHQLDSRYRQVAARLGENEAVELDVSGPKPRLTISPLASLDEPDSLKRLSKMISDLLPPVDLTELLLEINAHTGFADEFFHASEASARVDDLPVSISAVLMAEACNIGLEPLIRSNVPALTRHRLNWTKANYLRAETITSANARLVDFQATLPLAQIWGGGEVASADGMRFVTPVRTINAGPNRKYFGNNRGITWYNFVSDQYSGFHGFHGIVIPGTLRDSIFVLEGLLEQETGLNPTEIMTDTAGASDLVFGLFWLLGYQFSPRLADAGASVFWRMDHDADYGVLNDIARGQSDPRKIVLQWDEMIRTAGSLKLGKVQASVLVRSLLKSERPSGLTQAIIEVGRINKTLYLLNYIDDEDYRRRILTQLNRGESRHAVARAICHGQKGEIRKRYTDGQEDQLGALGLVTNAVVLWNTIYMQAALDHLRAQGETLNDEDIARLSPLCHGHINMLGHYSFTLAELVTKGHLRPLKEASEAENVA.

This sequence belongs to the transposase 7 family.

Required for transposition of transposon Tn3. This chain is Transposase for transposon Tn3 (tnpA), found in Escherichia coli.